Here is a 613-residue protein sequence, read N- to C-terminus: Protein ECM3 (613 aa).

Transmembrane regions (helical) follow at residues 10–30, 74–94, 106–126, and 143–163; these read IWASVRPIIKIYLIIGVGFGL, GIICLTSVILFATGLGFAFIV, GGILAGGMFPNISDLPIAYLQ, and VANVIIFLAMFLICVFNLGGF. Positions 177-256 are disordered; sequence DEENTLTNDD…PAIDDRSSNS (80 aa). Polar residues-rich tracts occupy residues 187–206 and 213–226; these read SAQQPTQPIEGNSSSSSNQD and ESTVPNSSQASYIS. Residues Ser291 and Ser338 each carry the phosphoserine modification. The disordered stretch occupies residues 345–366; the sequence is RRRKSSISSQGAPSVLQADGTI. 4 consecutive transmembrane segments (helical) span residues 432 to 452, 471 to 491, 546 to 566, and 587 to 607; these read MAVILALIIAFIPWVKALFVT, FIMDFTSYVGAASVPFGLILL, MLLFVTAITWNLPTMTTLIYF, and FLMLQYPLMVVSLPFLVSYFI.

Its subcellular location is the endoplasmic reticulum membrane. May be involved in cell wall organization and biogenesis. In Saccharomyces cerevisiae (strain ATCC 204508 / S288c) (Baker's yeast), this protein is Protein ECM3 (ECM3).